The primary structure comprises 314 residues: S-methyl-5'-thioadenosine phosphorylase (314 aa).

Phosphate is bound by residues Ser-31, 73–74 (RH), and 106–107 (SA). Met-207 is a substrate binding site. Thr-208 is a binding site for phosphate. A substrate-binding site is contributed by 231-233 (DYD).

This sequence belongs to the PNP/MTAP phosphorylase family. MTAP subfamily. As to quaternary structure, homohexamer. Dimer of a homotrimer.

It catalyses the reaction S-methyl-5'-thioadenosine + phosphate = 5-(methylsulfanyl)-alpha-D-ribose 1-phosphate + adenine. It participates in amino-acid biosynthesis; L-methionine biosynthesis via salvage pathway; S-methyl-5-thio-alpha-D-ribose 1-phosphate from S-methyl-5'-thioadenosine (phosphorylase route): step 1/1. Its function is as follows. Catalyzes the reversible phosphorylation of S-methyl-5'-thioadenosine (MTA) to adenine and 5-methylthioribose-1-phosphate. Involved in the breakdown of MTA, a major by-product of polyamine biosynthesis. Responsible for the first step in the methionine salvage pathway after MTA has been generated from S-adenosylmethionine. Has broad substrate specificity with 6-aminopurine nucleosides as preferred substrates. The chain is S-methyl-5'-thioadenosine phosphorylase from Prochlorococcus marinus (strain SARG / CCMP1375 / SS120).